Consider the following 200-residue polypeptide: NAD(P)H dehydrogenase (quinone) (200 aa).

Positions 4-191 (VLVLYYSSYG…DIARYQGKHV (188 aa)) constitute a Flavodoxin-like domain. FMN-binding positions include 10 to 15 (SSYGHV) and 79 to 81 (TRF). NAD(+) is bound at residue Y12. W99 lines the substrate pocket. FMN-binding positions include 114–120 (STGTQHG) and H135.

This sequence belongs to the WrbA family. FMN serves as cofactor.

The catalysed reaction is a quinone + NADH + H(+) = a quinol + NAD(+). It carries out the reaction a quinone + NADPH + H(+) = a quinol + NADP(+). This chain is NAD(P)H dehydrogenase (quinone), found in Burkholderia multivorans (strain ATCC 17616 / 249).